Here is a 339-residue protein sequence, read N- to C-terminus: tRNA pseudouridine synthase B (339 aa).

The active-site Nucleophile is Asp-40. The 46-residue stretch at 262–307 (FRRLSKFAYREEFEENTERSTAAYTLVREDANTGLTYKLPLEVELS) folds into the RPE1 insert domain.

Belongs to the pseudouridine synthase TruB family. Type 1 subfamily.

It catalyses the reaction uridine(55) in tRNA = pseudouridine(55) in tRNA. Its function is as follows. Responsible for synthesis of pseudouridine from uracil-55 in the psi GC loop of transfer RNAs. The polypeptide is tRNA pseudouridine synthase B (Rickettsia felis (strain ATCC VR-1525 / URRWXCal2) (Rickettsia azadi)).